The primary structure comprises 241 residues: Octanoyltransferase (241 aa).

A BPL/LPL catalytic domain is found at 38–227 (AGGPDTLLLL…AVCNALDGAL (190 aa)). Residues 85 to 92 (RGGKITWH), 157 to 159 (AIG), and 170 to 172 (GFA) contribute to the substrate site. Cys-188 (acyl-thioester intermediate) is an active-site residue.

This sequence belongs to the LipB family.

The protein resides in the cytoplasm. The enzyme catalyses octanoyl-[ACP] + L-lysyl-[protein] = N(6)-octanoyl-L-lysyl-[protein] + holo-[ACP] + H(+). Its pathway is protein modification; protein lipoylation via endogenous pathway; protein N(6)-(lipoyl)lysine from octanoyl-[acyl-carrier-protein]: step 1/2. Its function is as follows. Catalyzes the transfer of endogenously produced octanoic acid from octanoyl-acyl-carrier-protein onto the lipoyl domains of lipoate-dependent enzymes. Lipoyl-ACP can also act as a substrate although octanoyl-ACP is likely to be the physiological substrate. This is Octanoyltransferase from Mycobacterium ulcerans (strain Agy99).